A 255-amino-acid chain; its full sequence is uncharacterized protein (255 aa).

The N-terminal stretch at 1-18 is a signal peptide; the sequence is MRILIILSIILCSLFTKA.

Belongs to the MlaA family.

This is an uncharacterized protein from Rickettsia bellii (strain RML369-C).